A 145-amino-acid polypeptide reads, in one-letter code: Antiholin-like protein LrgA (145 aa).

Helical transmembrane passes span 10–30 (PAHF…SKII), 33–53 (FMPI…VLLC), 72–92 (NIGL…GVIS), and 96–116 (FLII…TGYV).

This sequence belongs to the CidA/LrgA family. LrgA subfamily.

It localises to the cell membrane. In terms of biological role, inhibits the expression or activity of extracellular murein hydrolases by interacting, possibly with LrgB, with the holin-like proteins CidA and/or CidB. The LrgAB and CidAB proteins may affect the proton motive force of the membrane. May be involved in programmed cell death (PCD), possibly triggering PCD in response to antibiotics and environmental stresses. In Staphylococcus aureus (strain Mu3 / ATCC 700698), this protein is Antiholin-like protein LrgA.